The chain runs to 433 residues: Enolase (433 aa).

Gln-166 contributes to the (2R)-2-phosphoglycerate binding site. The Proton donor role is filled by Glu-208. Mg(2+) contacts are provided by Asp-245, Glu-289, and Asp-316. Lys-341, Arg-370, Ser-371, and Lys-392 together coordinate (2R)-2-phosphoglycerate. Lys-341 functions as the Proton acceptor in the catalytic mechanism.

Belongs to the enolase family. The cofactor is Mg(2+).

The protein resides in the cytoplasm. It is found in the secreted. Its subcellular location is the cell surface. The enzyme catalyses (2R)-2-phosphoglycerate = phosphoenolpyruvate + H2O. It participates in carbohydrate degradation; glycolysis; pyruvate from D-glyceraldehyde 3-phosphate: step 4/5. In terms of biological role, catalyzes the reversible conversion of 2-phosphoglycerate (2-PG) into phosphoenolpyruvate (PEP). It is essential for the degradation of carbohydrates via glycolysis. The protein is Enolase of Acetivibrio thermocellus (strain ATCC 27405 / DSM 1237 / JCM 9322 / NBRC 103400 / NCIMB 10682 / NRRL B-4536 / VPI 7372) (Clostridium thermocellum).